The chain runs to 188 residues: Pyridoxal 5'-phosphate synthase subunit PdxT (188 aa).

Residue 46–48 coordinates L-glutamine; sequence GES. Residue Cys-78 is the Nucleophile of the active site. Residues Arg-105 and 134-135 each bind L-glutamine; that span reads IR. Active-site charge relay system residues include His-170 and Glu-172.

It belongs to the glutaminase PdxT/SNO family. In terms of assembly, in the presence of PdxS, forms a dodecamer of heterodimers. Only shows activity in the heterodimer.

It catalyses the reaction aldehydo-D-ribose 5-phosphate + D-glyceraldehyde 3-phosphate + L-glutamine = pyridoxal 5'-phosphate + L-glutamate + phosphate + 3 H2O + H(+). The enzyme catalyses L-glutamine + H2O = L-glutamate + NH4(+). Its pathway is cofactor biosynthesis; pyridoxal 5'-phosphate biosynthesis. In terms of biological role, catalyzes the hydrolysis of glutamine to glutamate and ammonia as part of the biosynthesis of pyridoxal 5'-phosphate. The resulting ammonia molecule is channeled to the active site of PdxS. In Moorella thermoacetica (strain ATCC 39073 / JCM 9320), this protein is Pyridoxal 5'-phosphate synthase subunit PdxT.